The sequence spans 146 residues: Ribonuclease H (146 aa).

Positions 1–143 constitute an RNase H type-1 domain; that stretch reads MEKKVTIYTD…CDELARLAVR (143 aa). Mg(2+) is bound by residues Asp-10, Glu-48, Asp-70, and Asp-135.

It belongs to the RNase H family. In terms of assembly, monomer. Mg(2+) is required as a cofactor.

It is found in the cytoplasm. The enzyme catalyses Endonucleolytic cleavage to 5'-phosphomonoester.. In terms of biological role, endonuclease that specifically degrades the RNA of RNA-DNA hybrids. This Chlorobium phaeovibrioides (strain DSM 265 / 1930) (Prosthecochloris vibrioformis (strain DSM 265)) protein is Ribonuclease H.